We begin with the raw amino-acid sequence, 445 residues long: Argininosuccinate synthase (445 aa).

ATP is bound by residues 17–25 and A43; that span reads AFSGGLDTS. Residue Y99 coordinates L-citrulline. Residues G129 and T131 each coordinate ATP. L-aspartate contacts are provided by T131, N135, and D136. N135 serves as a coordination point for L-citrulline. D136 provides a ligand contact to ATP. The L-citrulline site is built by R139 and S192. D194 contributes to the ATP binding site. T201, E203, and E280 together coordinate L-citrulline.

The protein belongs to the argininosuccinate synthase family. Type 2 subfamily. As to quaternary structure, homotetramer.

It is found in the cytoplasm. The catalysed reaction is L-citrulline + L-aspartate + ATP = 2-(N(omega)-L-arginino)succinate + AMP + diphosphate + H(+). Its pathway is amino-acid biosynthesis; L-arginine biosynthesis; L-arginine from L-ornithine and carbamoyl phosphate: step 2/3. The polypeptide is Argininosuccinate synthase (Gemmatimonas aurantiaca (strain DSM 14586 / JCM 11422 / NBRC 100505 / T-27)).